A 1273-amino-acid polypeptide reads, in one-letter code: Chitin synthase 7 (1273 aa).

The interval 1–69 is disordered; that stretch reads MPAVERNAPF…LINPSSGGPG (69 aa). Residues 1 to 79 are Cytoplasmic-facing; sequence MPAVERNAPF…FSAASRSKHR (79 aa). The helical transmembrane segment at 80–100 threads the bilayer; that stretch reads FSWWTAFSLFVTFWAPSPLLS. Topologically, residues 101-117 are extracellular; the sequence is SCCGLKDKQSRQAWREK. Residues 118-138 form a helical membrane-spanning segment; that stretch reads VSLVFIAILLGGFIGFITMGL. Residues 139–360 are Cytoplasmic-facing; that stretch reads NAALCPSASS…FISNLVLYCS (222 aa). The helical transmembrane segment at 361–381 threads the bilayer; sequence LVVILAIVLIRFFMAVWFAWF. Topologically, residues 382 to 820 are extracellular; sequence MAGRMSSPPR…LCGTFCFSMQ (439 aa). An N-linked (GlcNAc...) asparagine glycan is attached at Asn-412. Residues 416–451 are disordered; that stretch reads AAPWANKQRPPPSQPARRRRDSAQSATPSVPDSLSV. N-linked (GlcNAc...) asparagine glycans are attached at residues Asn-667 and Asn-796. The helical transmembrane segment at 821–841 threads the bilayer; sequence FVVFMDLLGTAVLPISIALTY. The Cytoplasmic portion of the chain corresponds to 842–857; sequence TLVVTYCLNPPHSFTE. The chain crosses the membrane as a helical span at residues 858–878; it reads AIPLMLLVAVIGMPALLILLA. Over 879–881 the chain is Extracellular; sequence TRK. Residues 882 to 902 traverse the membrane as a helical segment; the sequence is VVYVLWMLIYLLALPVWNFVL. At 903–1273 the chain is on the cytoplasmic side; sequence PVYSFWHFDD…RGRSYHDRFS (371 aa). Disordered stretches follow at residues 966 to 1009 and 1126 to 1273; these read RELE…SVTV and NGGG…DRFS. The span at 1000–1009 shows a compositional bias: low complexity; it reads SDSFSDSVTV. The span at 1215–1232 shows a compositional bias: pro residues; sequence QHPPQPSQPPQPPQPAQP. Over residues 1233–1246 the composition is skewed to low complexity; it reads TRPGGAPAAPPRGA.

This sequence belongs to the chitin synthase family. Class IV subfamily.

It is found in the cell membrane. The protein resides in the cytoplasmic vesicle membrane. The catalysed reaction is [(1-&gt;4)-N-acetyl-beta-D-glucosaminyl](n) + UDP-N-acetyl-alpha-D-glucosamine = [(1-&gt;4)-N-acetyl-beta-D-glucosaminyl](n+1) + UDP + H(+). In terms of biological role, polymerizes chitin, a structural polymer of the cell wall and septum, by transferring the sugar moiety of UDP-GlcNAc to the non-reducing end of the growing chitin polymer. The chain is Chitin synthase 7 from Mycosarcoma maydis (Corn smut fungus).